Consider the following 60-residue polypeptide: UPF0434 protein Rfer_3156 (60 aa).

This sequence belongs to the UPF0434 family.

The chain is UPF0434 protein Rfer_3156 from Albidiferax ferrireducens (strain ATCC BAA-621 / DSM 15236 / T118) (Rhodoferax ferrireducens).